The sequence spans 789 residues: Ent-kaurene synthase TSP4, chloroplastic (789 aa).

2 residues coordinate Mg(2+): D540 and D544. The DDXXD motif signature appears at 540–544 (DDFFD). Residues 638–656 (AYVSFALGPIVLPALYLVG) form a helical membrane-spanning segment. Residues N684, R687, and E692 each contribute to the Mg(2+) site.

Belongs to the terpene synthase family. It depends on Mg(2+) as a cofactor. As to expression, expressed in leaves and fruits, including trichomes.

The protein localises to the plastid. It is found in the chloroplast membrane. The enzyme catalyses ent-copalyl diphosphate = ent-kaur-16-ene + diphosphate. Its pathway is plant hormone biosynthesis; gibberellin biosynthesis. Its function is as follows. Involved in the biosynthesis of labdane-type diterpenoid including cleroda-dienols, and peregrinol lactones and furan derivatives, dopaminergic diterpenoids that can bind to dopamine receptors in the human pituitary gland, have probably ability to lower prolactin levels, and are used to treat menstrual cycle disorders (e.g. premenstrual syndrome and mastodynia). Terpene synthase that produces ent-kaurene from ent-copalyl diphosphate. The protein is Ent-kaurene synthase TSP4, chloroplastic of Vitex agnus-castus (Chaste tree).